The sequence spans 363 residues: Peptide chain release factor 1 (363 aa).

Q237 is subject to N5-methylglutamine. Positions 281–302 are disordered; it reads QQAEDEKSHAEEQTIRRSLVAS. The span at 282 to 295 shows a compositional bias: basic and acidic residues; the sequence is QAEDEKSHAEEQTI.

The protein belongs to the prokaryotic/mitochondrial release factor family. Post-translationally, methylated by PrmC. Methylation increases the termination efficiency of RF1.

The protein localises to the cytoplasm. Its function is as follows. Peptide chain release factor 1 directs the termination of translation in response to the peptide chain termination codons UAG and UAA. This Psychromonas ingrahamii (strain DSM 17664 / CCUG 51855 / 37) protein is Peptide chain release factor 1.